Reading from the N-terminus, the 351-residue chain is Glycerol-1-phosphate dehydrogenase [NAD(P)+] (351 aa).

NAD(+) contacts are provided by residues Gly97–Asp101 and Thr119–Ser122. Residue Asp124 coordinates substrate. Ser128 is a binding site for NAD(+). Asp171 provides a ligand contact to substrate. The Zn(2+) site is built by Asp171 and His251. Residue His255 participates in substrate binding. Position 267 (His267) interacts with Zn(2+).

It belongs to the glycerol-1-phosphate dehydrogenase family. As to quaternary structure, homodimer. Zn(2+) serves as cofactor.

It localises to the cytoplasm. It carries out the reaction sn-glycerol 1-phosphate + NAD(+) = dihydroxyacetone phosphate + NADH + H(+). The catalysed reaction is sn-glycerol 1-phosphate + NADP(+) = dihydroxyacetone phosphate + NADPH + H(+). It participates in membrane lipid metabolism; glycerophospholipid metabolism. Its function is as follows. Catalyzes the NAD(P)H-dependent reduction of dihydroxyacetonephosphate (DHAP or glycerone phosphate) to glycerol 1-phosphate (G1P). The G1P thus generated is used as the glycerophosphate backbone of phospholipids in the cellular membranes of Archaea. The chain is Glycerol-1-phosphate dehydrogenase [NAD(P)+] from Saccharolobus islandicus (strain M.16.27) (Sulfolobus islandicus).